The sequence spans 298 residues: 4-hydroxy-tetrahydrodipicolinate synthase (298 aa).

A pyruvate-binding site is contributed by Thr-48. The active-site Proton donor/acceptor is the Tyr-137. The active-site Schiff-base intermediate with substrate is the Lys-166. Ile-207 is a pyruvate binding site.

Belongs to the DapA family. In terms of assembly, homotetramer; dimer of dimers.

Its subcellular location is the cytoplasm. The catalysed reaction is L-aspartate 4-semialdehyde + pyruvate = (2S,4S)-4-hydroxy-2,3,4,5-tetrahydrodipicolinate + H2O + H(+). It participates in amino-acid biosynthesis; L-lysine biosynthesis via DAP pathway; (S)-tetrahydrodipicolinate from L-aspartate: step 3/4. Its function is as follows. Catalyzes the condensation of (S)-aspartate-beta-semialdehyde [(S)-ASA] and pyruvate to 4-hydroxy-tetrahydrodipicolinate (HTPA). The chain is 4-hydroxy-tetrahydrodipicolinate synthase from Campylobacter lari (strain RM2100 / D67 / ATCC BAA-1060).